Reading from the N-terminus, the 574-residue chain is Putative ABC transporter ATP-binding protein VVA0347 (574 aa).

ABC transporter domains are found at residues 3–244 (IEFS…GIRE) and 299–533 (LDVR…ANLT). ATP contacts are provided by residues 37–44 (GPSGSGKS) and 332–339 (GKNGSGKS).

It belongs to the ABC transporter superfamily.

Its subcellular location is the cell inner membrane. Functionally, probably part of an ABC transporter complex. Responsible for energy coupling to the transport system. This is Putative ABC transporter ATP-binding protein VVA0347 from Vibrio vulnificus (strain YJ016).